We begin with the raw amino-acid sequence, 262 residues long: Hydroxyethylthiazole kinase (262 aa).

Met-50 provides a ligand contact to substrate. Positions 125 and 171 each coordinate ATP. Gly-198 provides a ligand contact to substrate.

The protein belongs to the Thz kinase family. It depends on Mg(2+) as a cofactor.

It catalyses the reaction 5-(2-hydroxyethyl)-4-methylthiazole + ATP = 4-methyl-5-(2-phosphooxyethyl)-thiazole + ADP + H(+). The protein operates within cofactor biosynthesis; thiamine diphosphate biosynthesis; 4-methyl-5-(2-phosphoethyl)-thiazole from 5-(2-hydroxyethyl)-4-methylthiazole: step 1/1. Functionally, catalyzes the phosphorylation of the hydroxyl group of 4-methyl-5-beta-hydroxyethylthiazole (THZ). This is Hydroxyethylthiazole kinase from Escherichia coli O7:K1 (strain IAI39 / ExPEC).